We begin with the raw amino-acid sequence, 282 residues long: uncharacterized protein (282 aa).

A helical membrane pass occupies residues 22–42; it reads YLFTLGSFVTMFFVLCISPVF.

It is found in the cell membrane. This is an uncharacterized protein from Bacillus anthracis.